The following is a 1029-amino-acid chain: MLKIFEKVFGSKHDKDIKKIKPLVDEINEIYATFASLSDDQLRAKSMALKSNLQEELTLIRQQNSDLSGKLENPDITISQIESINRELDELEKKYEEETAAALEKILPETFAIVKDTCRRLKGHTYQVMDHTMTWDMIPYDVQLLGGIVLHQGKVTEMATGEGKTLVSTLPAFLNALTGRGVHIVTVNDYLAQRDREWMSPVFEFHGIETGVILSGMRPEERKKEYACDITYGTNNEFGFDYLRDNMAGSPADLVQKEYYYGIVDEVDSVLIDEARTPLIISGPVPNANTSKFTEIKPWMERLVKNQQNLVAGYLAEAEKVVKEKPNDFQAALALLRAKRGQPKNTRLIKMLSQTGMAKLMQSAENEYLKDNSRRMHEVDDELYFSIDEKSNAIDLTDKGRDFLSKLSNQDSDLFLVPDVGAEIAAIESDEALDTEQKIKKKDEVYRLFSDRSEKLHNISQLLKAYSLFEKDDDYVVQNGQVMIVDEFTGRILPGRRYSDGLHQAIEAKENVKIEGETQTLATITIQNFFRLYKKLSGMTGTAETESAELFDIYKLDVVVIPTNRPIIRKDQDDYVYKTRKEKYAAIIGKIIELQKKGQPVLVGTASVDVSETLSRMLRAKKITHNVLNAKQHGREAEIVASAGQNGAVTIATNMAGRGTDIKLGEGVKELGGLYILGSERHESRRIDRQLRGRSGRQGDPGESIFYVSLEDNLMRLFGSDRVISIMDKLGHEEGDVIEHSMVTKSIERAQKKVEEQNFSIRKRLLEYDDVLNQQRDVIYKRRKGALTKKRLTADIFDLLHDYSENTVNQYAREFDVKGLEEQVLRDLSVEFRIESITFENEGVEKTAEQLYKAALEFYKRKEDVVPEEIMGQIEKYAVLNVIDQKWREHLREIDSLKEGINLRAYGQKDPLLEYKQEAYKLFVSMLGEIEHETLSLAFKLFPVTEEAREKIEQEQKKSQVQQDRLVARHEKAETAYENSGSRPEGRQEKKAENGKEPLQQPVIADKTPGRNDPCSCGSGKKYKNCCGK.

ATP is bound by residues Gln-143, 161–165 (GEGKT), and Asp-661. Residues 953 to 1029 (EQEQKKSQVQ…GKKYKNCCGK (77 aa)) are disordered. Composition is skewed to basic and acidic residues over residues 966 to 975 (LVARHEKAET) and 984 to 996 (PEGR…ENGK). Zn(2+)-binding residues include Cys-1015, Cys-1017, Cys-1026, and Cys-1027.

Belongs to the SecA family. As to quaternary structure, monomer and homodimer. Part of the essential Sec protein translocation apparatus which comprises SecA, SecYEG and auxiliary proteins SecDF. Other proteins may also be involved. Requires Zn(2+) as cofactor.

It is found in the cell inner membrane. The protein localises to the cytoplasm. It carries out the reaction ATP + H2O + cellular proteinSide 1 = ADP + phosphate + cellular proteinSide 2.. Part of the Sec protein translocase complex. Interacts with the SecYEG preprotein conducting channel. Has a central role in coupling the hydrolysis of ATP to the transfer of proteins into and across the cell membrane, serving as an ATP-driven molecular motor driving the stepwise translocation of polypeptide chains across the membrane. This chain is Protein translocase subunit SecA, found in Chlorobium phaeobacteroides (strain BS1).